We begin with the raw amino-acid sequence, 818 residues long: MSIGRAVNFNSTVLPVLPLRDVVIFPNIMLPLFVGREKSVHALEYAISSSSHQNEIFLIAQKDGSIDNPEPENLYEVGVLANIIQPLIKLPDNAVKVMIHGVRRGRVIEYISSHTLLQARVALDGHYEYGENEDNIDLEALRRSVIDAFDNWCKLSKKSRPEIIIDPIDQVKEVNQIVDMIASHLNIKVSDKQNILEVYNPKERLKKVFALIEREISILSAQNRLYKTIKSQVESTQKVYYLNEQLKAIQKELGEFENGDEGNILNEFEKKINETKLSEEAKEKAITDLKRYKKMNPISPEATVISSYLHWLLDLPWGKYKDAKINLNAAKKILDENHYGIEKVKDRIIEFLAVLKRVKEIKGPILCLVGPPGVGKTSLAKSMAKAVGRDFVRISLGGIRDESEIRGHRKTYIGSMPGKIIQHMKKANSCNPLFLLDEIDKMGSDSRGDPASALLEVLDTEHNKHFTDHYLEVEFDLSSVMFVATANSLNLPHPLRDRMEIIQLSGYTEDEKISIATHHLIPKLKKEHGLHQKEWEITNEALYELIRLYTRESGVRSMERELAKLMRKAVKAILTDKNKKISVETGNLQDYLGVRKYTFGIAENESLVGIVTGLAYTETGGDILMIESVLIPGKGEIKYTGKLGEVMQESIKAAYSYVRSNCLFFGIKPEKFQNNDIHLHVPEGAVPKDGPSAGSAVCTSIVSLMTNIPVNKSVAMTGEVTLRGRVLAIGGLREKLLAALRGSIKTVIIPSENEKDMQEIPANIKEEINVIFAENIDEVIKVALMHPITSIDDNNEISVSTSIENKDNTFPSSETLKH.

Positions 14-216 constitute a Lon N-terminal domain; it reads LPVLPLRDVV…KVFALIEREI (203 aa). Residue 370 to 377 coordinates ATP; it reads GPPGVGKT. The Lon proteolytic domain occupies 605-786; that stretch reads ESLVGIVTGL…DEVIKVALMH (182 aa). Catalysis depends on residues Ser692 and Lys735.

It belongs to the peptidase S16 family. Homohexamer. Organized in a ring with a central cavity.

It localises to the cytoplasm. It catalyses the reaction Hydrolysis of proteins in presence of ATP.. In terms of biological role, ATP-dependent serine protease that mediates the selective degradation of mutant and abnormal proteins as well as certain short-lived regulatory proteins. Required for cellular homeostasis and for survival from DNA damage and developmental changes induced by stress. Degrades polypeptides processively to yield small peptide fragments that are 5 to 10 amino acids long. Binds to DNA in a double-stranded, site-specific manner. This chain is Lon protease, found in Wolbachia pipientis subsp. Culex pipiens (strain wPip).